The primary structure comprises 55 residues: Large ribosomal subunit protein bL33 (55 aa).

Belongs to the bacterial ribosomal protein bL33 family.

In Aliivibrio fischeri (strain ATCC 700601 / ES114) (Vibrio fischeri), this protein is Large ribosomal subunit protein bL33.